Consider the following 269-residue polypeptide: Regulatory protein RecX (269 aa).

The protein belongs to the RecX family.

The protein localises to the cytoplasm. Functionally, modulates RecA activity. This Geobacillus kaustophilus (strain HTA426) protein is Regulatory protein RecX.